Reading from the N-terminus, the 584-residue chain is AEGREDPELLVTVRGGRLRGLRLKAPGGPVSAFLGIPFEEPPVGPRRFLPPEPKRPWAGVLDATAFQSVCYQYVDTLYPGFEGTEMWNPNRELSEDCLYLNVWTPYPRPTSPTPVLVWIYGGGFYSGASSLDVYYGRFLVQAEGTVLVAMNYRVGAFGFTCLPGSREAPGNVGLLDQRLALQWVQENVAAFGGDPASVTLFGESAGAASVGLHLLSPPSRGLFHRAVLQSGAPNGPWATVGVGEARRRATLLARLVVCPPGGAGGNDTELVACLRTRPAQDLVDHEWRVLPQESIFRFSFVPVVDGDFLSDTPEALINAGDFQGLQVLVGVVKDEGTYFLVYGAPGFSKDNESFISRAQFLAGVRVGVPQASDLAAEAVVLHYTDWLHPEDPARLRDALSDVVGDHNVVCPVAQLAGRLAAQGARVYAYVFEHRASTLSWPLWMGVPHGYEIEFIFGLPLEPSLNYTEEERIFAQRLMRYWANFARTGDPNEPRDAKAPQWPPYTAGAQQYVSLNLRPLEVRRGLRAQACAFWNRFLPKLLSATDTLDEAERQWKAEFHRWSSYMVHWKNQFDHYSKQDRCSDL.

Residue alanine 1 is a signal peptide. The cysteines at positions 70 and 97 are disulfide-linked. The active-site Acyl-ester intermediate is the serine 204. A disulfide bridge connects residues cysteine 258 and cysteine 273. An N-linked (GlcNAc...) asparagine glycan is attached at asparagine 266. The Charge relay system role is filled by glutamate 335. N-linked (GlcNAc...) asparagine glycosylation is present at asparagine 351. Cysteine 410 and cysteine 530 are disulfide-bonded. Histidine 448 acts as the Charge relay system in catalysis. The N-linked (GlcNAc...) asparagine glycan is linked to asparagine 465.

Belongs to the type-B carboxylesterase/lipase family. In terms of assembly, homotetramer; composed of disulfide-linked homodimers. Interacts with PRIMA1. The interaction with PRIMA1 is required to anchor it to the basal lamina of cells and organize into tetramers.

It localises to the synapse. It is found in the secreted. The protein resides in the cell membrane. It carries out the reaction acetylcholine + H2O = choline + acetate + H(+). Functionally, terminates signal transduction at the neuromuscular junction by rapid hydrolysis of the acetylcholine released into the synaptic cleft. In Oryctolagus cuniculus (Rabbit), this protein is Acetylcholinesterase (ACHE).